A 90-amino-acid chain; its full sequence is Small ribosomal subunit protein uS15 (90 aa).

This sequence belongs to the universal ribosomal protein uS15 family. In terms of assembly, part of the 30S ribosomal subunit. Forms a bridge to the 50S subunit in the 70S ribosome, contacting the 23S rRNA.

In terms of biological role, one of the primary rRNA binding proteins, it binds directly to 16S rRNA where it helps nucleate assembly of the platform of the 30S subunit by binding and bridging several RNA helices of the 16S rRNA. Its function is as follows. Forms an intersubunit bridge (bridge B4) with the 23S rRNA of the 50S subunit in the ribosome. This is Small ribosomal subunit protein uS15 from Helicobacter pylori (strain Shi470).